The primary structure comprises 187 residues: Adenylate kinase (187 aa).

10 to 15 serves as a coordination point for ATP; the sequence is GSGKGT. The segment at 30–59 is NMP; sequence STGDMLRAEIAAGSELGKQAKAVMDAGNLV. AMP-binding positions include Thr-31, Arg-36, 57-59, 85-88, and Gln-92; these read NLV and GYPR. Residues 126–136 form an LID region; that stretch reads GRAKEQGRADD. Arg-127 lines the ATP pocket. AMP is bound by residues Arg-133 and Arg-144. Position 172 (Gly-172) interacts with ATP.

It belongs to the adenylate kinase family. Monomer.

The protein resides in the cytoplasm. The enzyme catalyses AMP + ATP = 2 ADP. The protein operates within purine metabolism; AMP biosynthesis via salvage pathway; AMP from ADP: step 1/1. Functionally, catalyzes the reversible transfer of the terminal phosphate group between ATP and AMP. Plays an important role in cellular energy homeostasis and in adenine nucleotide metabolism. This is Adenylate kinase from Stenotrophomonas maltophilia (strain R551-3).